We begin with the raw amino-acid sequence, 255 residues long: Pimeloyl-[acyl-carrier protein] methyl ester esterase (255 aa).

An AB hydrolase-1 domain is found at leucine 16–glutamate 241. Residues tryptophan 22, serine 82 to leucine 83, and phenylalanine 143 to glutamine 147 contribute to the substrate site. Catalysis depends on serine 82, which acts as the Nucleophile. Active-site residues include aspartate 207 and histidine 235. Histidine 235 serves as a coordination point for substrate.

This sequence belongs to the AB hydrolase superfamily. Carboxylesterase BioH family. As to quaternary structure, monomer.

The protein localises to the cytoplasm. The enzyme catalyses 6-carboxyhexanoyl-[ACP] methyl ester + H2O = 6-carboxyhexanoyl-[ACP] + methanol + H(+). The protein operates within cofactor biosynthesis; biotin biosynthesis. The physiological role of BioH is to remove the methyl group introduced by BioC when the pimeloyl moiety is complete. It allows to synthesize pimeloyl-ACP via the fatty acid synthetic pathway through the hydrolysis of the ester bonds of pimeloyl-ACP esters. The protein is Pimeloyl-[acyl-carrier protein] methyl ester esterase of Vibrio cholerae serotype O1 (strain ATCC 39315 / El Tor Inaba N16961).